The following is a 153-amino-acid chain: Large ribosomal subunit protein uL15 (153 aa).

The disordered stretch occupies residues Arg-21–Ser-42. Residues Ile-23–Ile-35 are compositionally biased toward gly residues.

This sequence belongs to the universal ribosomal protein uL15 family. As to quaternary structure, part of the 50S ribosomal subunit.

Its function is as follows. Binds to the 23S rRNA. This is Large ribosomal subunit protein uL15 from Rickettsia peacockii (strain Rustic).